The primary structure comprises 1583 residues: Dynamin-binding protein (1583 aa).

Met-1 bears the N-acetylmethionine mark. SH3 domains are found at residues 2 to 61 (EAGS…IVTI), 66 to 126 (EGER…ELCL), 145 to 204 (YSMG…LLGP), and 243 to 302 (QPGT…LFSK). 3 disordered regions span residues 217-244 (HNDCIINGEEETPTGEEERGPEEDEEQP), 306-329 (EETMDLPKESSPTEIPDTSLDCRE), and 366-464 (ECEV…RGMY). The span at 224–243 (GEEETPTGEEERGPEEDEEQ) shows a compositional bias: acidic residues. Residues 366-379 (ECEVHKSSHQDEGT) are compositionally biased toward basic and acidic residues. Over residues 406 to 442 (ETINGVSSQSQVPFRPRWQQNQYYSTTGRGHLSTEQY) the composition is skewed to polar residues. Ser-495 carries the post-translational modification Phosphoserine. Disordered regions lie at residues 594–656 (RGSS…PSAQ) and 671–693 (LFTHESCESPEKEGPENLDQTLD). Residues 637–653 (PEPPLAMRPSRPAPLPP) are compositionally biased toward pro residues. Over residues 675 to 685 (ESCESPEKEGP) the composition is skewed to basic and acidic residues. Residues 742 to 762 (LEFYESNIESLNMELQQLREM) adopt a coiled-coil conformation. Residues 791–974 (KRAKVIEELL…KEINVNINEY (184 aa)) form the DH domain. In terms of domain architecture, BAR spans 1015–1224 (LKHLTGFAPQ…LKVAGREGNL (210 aa)). The SH3 5 domain occupies 1292–1355 (PPEKLFQAER…YSSFLKPYNT (64 aa)). The segment at 1357–1496 (RSHSDVSVGS…GRNGQGKDLT (140 aa)) is disordered. A compositionally biased stretch (low complexity) spans 1361 to 1387 (DVSVGSHSSTESEQSSSSPRFPRQNSS). Residues 1388 to 1414 (GTLTFNPGSMAVSFTSGSCQKQPQDAT) are compositionally biased toward polar residues. Over residues 1433-1456 (SESSPSRCPSDPDSSPQPRSWDSP) the composition is skewed to low complexity. The SH3 6 domain maps to 1519–1582 (EGNQVYFAVY…PSNYIRKAEY (64 aa)).

Binds DNM1 via its N-terminal SH3 domains. The C-terminal SH3 domain binds a complex containing actin, tubulin, Hsp70 and actin-regulatory proteins, such as ENAH, EVL, WIRE, CR16, WAVE1 and NAP1L1. Interacts with FASLG. Interacts (via SH3 domain 6) with WASL. Interacts (via SH3 domain 6) interacts with ENAH. Interacts (via C-terminal domain) with TJP1; required for the apical cell-cell junction localization of DNMBP.

Its subcellular location is the cytoplasm. The protein resides in the golgi apparatus. The protein localises to the golgi stack. It localises to the cytoskeleton. It is found in the synapse. Its subcellular location is the cell junction. In terms of biological role, plays a critical role as a guanine nucleotide exchange factor (GEF) for CDC42 in several intracellular processes associated with the actin and microtubule cytoskeleton. Regulates the structure of apical junctions in epithelial cells. Participates in the normal lumenogenesis of epithelial cell cysts by regulating spindle orientation. Plays a key role in ciliogenesis and cyst formation. May play a role in membrane trafficking between the cell surface and the Golgi. The chain is Dynamin-binding protein from Canis lupus familiaris (Dog).